A 150-amino-acid chain; its full sequence is Large ribosomal subunit protein uL15 (150 aa).

Belongs to the universal ribosomal protein uL15 family. Part of the 50S ribosomal subunit.

In terms of biological role, binds to the 23S rRNA. The sequence is that of Large ribosomal subunit protein uL15 from Rickettsia typhi (strain ATCC VR-144 / Wilmington).